Consider the following 275-residue polypeptide: Orotidine 5'-phosphate decarboxylase (275 aa).

The active-site Proton donor is lysine 101.

The protein belongs to the OMP decarboxylase family. Type 2 subfamily.

The enzyme catalyses orotidine 5'-phosphate + H(+) = UMP + CO2. Its pathway is pyrimidine metabolism; UMP biosynthesis via de novo pathway; UMP from orotate: step 2/2. The chain is Orotidine 5'-phosphate decarboxylase from Leptospira interrogans serogroup Icterohaemorrhagiae serovar Lai (strain 56601).